The following is a 70-amino-acid chain: Putative ankyrin repeat protein RC0502 (70 aa).

One copy of the ANK repeat lies at 9–43 (KGRIPIHYATYSKQHEITQILILLQPGSEIDTVDN).

The polypeptide is Putative ankyrin repeat protein RC0502 (Rickettsia conorii (strain ATCC VR-613 / Malish 7)).